A 110-amino-acid chain; its full sequence is Prothymosin alpha (110 aa).

The residue at position 1 (M1) is an N-acetylmethionine. The interval 1–110 is disordered; the sequence is MSDAAVDTSS…TKKQKTDEDD (110 aa). S2 bears the N-acetylserine; in Prothymosin alpha, N-terminally processed mark. Position 2 is a phosphoserine (S2). Position 8 is a phosphothreonine; by CK2 (T8). Phosphoserine occurs at positions 9 and 10. A phosphothreonine; by CK2 mark is found at T13 and T14. Over residues 13 to 31 the composition is skewed to basic and acidic residues; it reads TTKDLKEKKEVVEEAENGR. An N6-acetyllysine; alternate modification is found at K15. At K15 the chain carries N6-succinyllysine; alternate. Positions 32-41 are enriched in low complexity; sequence EAPANGNANE. Acidic residues predominate over residues 42-83; it reads ENGEQEADNEVDEEEEEGGEEEEEEEEGDGEEEDGDEDEEAE. The segment covering 100–110 has biased composition (basic and acidic residues); that stretch reads DTKKQKTDEDD. T101 is subject to Phosphothreonine. K102 carries the post-translational modification N6-acetyllysine; alternate. K102 is covalently cross-linked (Glycyl lysine isopeptide (Lys-Gly) (interchain with G-Cter in SUMO2); alternate). T106 is subject to Phosphothreonine.

This sequence belongs to the pro/parathymosin family. In terms of assembly, interacts with NUPR1; regulates apoptotic process. Post-translationally, covalently linked to a small RNA of about 20 nucleotides.

Its subcellular location is the nucleus. In terms of biological role, prothymosin alpha may mediate immune function by conferring resistance to certain opportunistic infections. The protein is Prothymosin alpha (PTMA) of Bos taurus (Bovine).